Consider the following 281-residue polypeptide: uncharacterized protein (281 aa).

Disordered stretches follow at residues 192–212 (SNSS…IQET) and 227–281 (EDYV…SEEY). Residues 200–211 (MDKKSDDSKIQE) show a composition bias toward basic and acidic residues. Composition is skewed to acidic residues over residues 227 to 240 (EDYV…ISDN) and 249 to 260 (DTDSDLGDLEDP).

The protein belongs to the cullin family.

This is an uncharacterized protein from Acanthamoeba polyphaga (Amoeba).